Reading from the N-terminus, the 211-residue chain is ATP phosphoribosyltransferase (211 aa).

Belongs to the ATP phosphoribosyltransferase family. Short subfamily. In terms of assembly, heteromultimer composed of HisG and HisZ subunits.

It localises to the cytoplasm. The enzyme catalyses 1-(5-phospho-beta-D-ribosyl)-ATP + diphosphate = 5-phospho-alpha-D-ribose 1-diphosphate + ATP. It functions in the pathway amino-acid biosynthesis; L-histidine biosynthesis; L-histidine from 5-phospho-alpha-D-ribose 1-diphosphate: step 1/9. Catalyzes the condensation of ATP and 5-phosphoribose 1-diphosphate to form N'-(5'-phosphoribosyl)-ATP (PR-ATP). Has a crucial role in the pathway because the rate of histidine biosynthesis seems to be controlled primarily by regulation of HisG enzymatic activity. This is ATP phosphoribosyltransferase from Pseudomonas entomophila (strain L48).